Consider the following 162-residue polypeptide: ATP synthase subunit b 1 (162 aa).

Residues 1-21 traverse the membrane as a helical segment; that stretch reads MLLTAEFWVAVAFVAFLVIVW.

The protein belongs to the ATPase B chain family. In terms of assembly, F-type ATPases have 2 components, F(1) - the catalytic core - and F(0) - the membrane proton channel. F(1) has five subunits: alpha(3), beta(3), gamma(1), delta(1), epsilon(1). F(0) has three main subunits: a(1), b(2) and c(10-14). The alpha and beta chains form an alternating ring which encloses part of the gamma chain. F(1) is attached to F(0) by a central stalk formed by the gamma and epsilon chains, while a peripheral stalk is formed by the delta and b chains.

It is found in the cell inner membrane. Functionally, f(1)F(0) ATP synthase produces ATP from ADP in the presence of a proton or sodium gradient. F-type ATPases consist of two structural domains, F(1) containing the extramembraneous catalytic core and F(0) containing the membrane proton channel, linked together by a central stalk and a peripheral stalk. During catalysis, ATP synthesis in the catalytic domain of F(1) is coupled via a rotary mechanism of the central stalk subunits to proton translocation. In terms of biological role, component of the F(0) channel, it forms part of the peripheral stalk, linking F(1) to F(0). The chain is ATP synthase subunit b 1 from Methylorubrum extorquens (strain PA1) (Methylobacterium extorquens).